Here is a 369-residue protein sequence, read N- to C-terminus: 2-aminoethylphosphonate--pyruvate transaminase (369 aa).

K193 is modified (N6-(pyridoxal phosphate)lysine).

This sequence belongs to the class-V pyridoxal-phosphate-dependent aminotransferase family. PhnW subfamily. As to quaternary structure, homodimer. Pyridoxal 5'-phosphate serves as cofactor.

The catalysed reaction is (2-aminoethyl)phosphonate + pyruvate = phosphonoacetaldehyde + L-alanine. Functionally, involved in phosphonate degradation. This Pseudomonas fluorescens (strain Pf0-1) protein is 2-aminoethylphosphonate--pyruvate transaminase.